A 308-amino-acid chain; its full sequence is N-acetylneuraminate lyase (308 aa).

Aceneuramate contacts are provided by threonine 50 and threonine 51. Residue tyrosine 142 is the Proton donor of the active site. Residue lysine 172 is the Schiff-base intermediate with substrate of the active site. Residues serine 174, glycine 198, aspartate 200, glutamate 201, and serine 217 each coordinate aceneuramate.

It belongs to the DapA family. NanA subfamily. In terms of assembly, homotetramer.

It localises to the cytoplasm. The catalysed reaction is aceneuramate = aldehydo-N-acetyl-D-mannosamine + pyruvate. Its pathway is amino-sugar metabolism; N-acetylneuraminate degradation. Functionally, catalyzes the cleavage of N-acetylneuraminic acid (sialic acid) to form pyruvate and N-acetylmannosamine via a Schiff base intermediate. It prevents sialic acids from being recycled and returning to the cell surface. Involved in the N-glycolylneuraminic acid (Neu5Gc) degradation pathway. In Gallus gallus (Chicken), this protein is N-acetylneuraminate lyase.